The primary structure comprises 338 residues: Acyl-CoA Delta(11) desaturase (338 aa).

2 helical membrane-spanning segments follow: residues 33 to 53 and 61 to 81; these read IVYFNIITFAYWHIAGLYGLY and WATVLFSFFLFVVAEVGVTAG. The Histidine box-1 signature appears at 83 to 88; it reads HRLWSH. Residues 97-117 form a helical membrane-spanning segment; it reads LQILLMVMNSLAFQNTVIDWV. The Histidine box-2 motif lies at 120 to 124; that stretch reads HRLHH. 2 consecutive transmembrane segments (helical) span residues 181 to 201 and 212 to 234; these read AIPFIGAVCFVLPTLIPVYGW and AMLRYIMNLNVTFLVNSAAHIYG. The Histidine box-3 motif lies at 260 to 264; that stretch reads HNYHH. The disordered stretch occupies residues 318 to 338; sequence TNLWGLEDVDTPEDLKNTKGE.

This sequence belongs to the fatty acid desaturase type 1 family. Fe cation is required as a cofactor. As to expression, detected in the pheromone gland.

The protein resides in the membrane. The enzyme catalyses an 11,12-saturated fatty acyl-CoA + 2 Fe(II)-[cytochrome b5] + O2 + 2 H(+) = an (11Z)-Delta(11)-fatty acyl-CoA + 2 Fe(III)-[cytochrome b5] + 2 H2O. In terms of biological role, catalyzes the formation of delta(11) fatty acyl precursors in the pheromone gland, and has high activity towards palmitic acid and stearic acid. This Spodoptera littoralis (Egyptian cotton leafworm) protein is Acyl-CoA Delta(11) desaturase.